The chain runs to 692 residues: SH3 domain-containing protein 21 (692 aa).

Residues 1 to 60 (MVQSELQLQPRAGGRAEAASWGDRGNDKGGFGNPDMPSVSPGPQRPPKLSSLAYDSPPDY) form a disordered region. One can recognise an SH3 domain in the interval 65–126 (SHPEAYRVLF…PDNFVLPPPP (62 aa)). Disordered stretches follow at residues 132–501 (PRKV…EVLP), 536–605 (PKGG…SQET), and 672–692 (VMQGTQKSQTPRIIHAQTQTY). Over residues 177–186 (PSRDSQKLTS) the composition is skewed to basic and acidic residues. Positions 210–220 (TQTPQQRSVSS) are enriched in polar residues. 3 stretches are compositionally biased toward basic and acidic residues: residues 378-396 (VSTRDDTQFHHFSSEEALQ), 490-501 (NEERLLRGEVLP), and 542-582 (SKEE…KEEV). The stretch at 628 to 678 (SLRGEVESLRRALELMGVQLERKLTDIWEELKSEKEQRQRLEVQVMQGTQK) forms a coiled coil. A compositionally biased stretch (polar residues) spans 673-692 (MQGTQKSQTPRIIHAQTQTY).

In Macaca fascicularis (Crab-eating macaque), this protein is SH3 domain-containing protein 21 (SH3D21).